The sequence spans 591 residues: Laccase (591 aa).

Residues 1–20 (MPSFFRALFSGLIASQLSWA) form the signal peptide. Plastocyanin-like domains follow at residues 66 to 189 (VRQY…IQID) and 198 to 356 (IDLG…HPTN). Asn-121 carries an N-linked (GlcNAc...) asparagine glycan. Positions 126, 128, 171, and 173 each coordinate Cu cation. 2 disulfides stabilise this stretch: Cys-147–Cys-571 and Cys-332–Cys-366. Asn-234, Asn-242, Asn-265, and Asn-323 each carry an N-linked (GlcNAc...) asparagine glycan. N-linked (GlcNAc...) asparagine glycans are attached at residues Asn-407 and Asn-425. One can recognise a Plastocyanin-like 3 domain in the interval 416-551 (GHPITQYVIN…AGLGNTFLEQ (136 aa)). Positions 463, 466, 468, 533, 534, 535, and 539 each coordinate Cu cation.

Belongs to the multicopper oxidase family. Requires Cu cation as cofactor.

Its subcellular location is the secreted. It catalyses the reaction 4 hydroquinone + O2 = 4 benzosemiquinone + 2 H2O. Its function is as follows. Lignin degradation and detoxification of lignin-derived products. This Cryphonectria parasitica (Chestnut blight fungus) protein is Laccase (LAC-1).